Reading from the N-terminus, the 461-residue chain is Phosphoglucosamine mutase (461 aa).

Catalysis depends on S113, which acts as the Phosphoserine intermediate. 4 residues coordinate Mg(2+): S113, D251, D253, and D255. S113 carries the post-translational modification Phosphoserine.

It belongs to the phosphohexose mutase family. The cofactor is Mg(2+). Activated by phosphorylation.

The catalysed reaction is alpha-D-glucosamine 1-phosphate = D-glucosamine 6-phosphate. Catalyzes the conversion of glucosamine-6-phosphate to glucosamine-1-phosphate. The chain is Phosphoglucosamine mutase from Prochlorococcus marinus (strain SARG / CCMP1375 / SS120).